The primary structure comprises 114 residues: Flagellar hook-basal body complex protein FliE (114 aa).

The protein belongs to the FliE family.

The protein localises to the bacterial flagellum basal body. This is Flagellar hook-basal body complex protein FliE from Burkholderia cenocepacia (strain ATCC BAA-245 / DSM 16553 / LMG 16656 / NCTC 13227 / J2315 / CF5610) (Burkholderia cepacia (strain J2315)).